Consider the following 631-residue polypeptide: Myotonin-protein kinase (631 aa).

The Cytoplasmic segment spans residues 1–592 (MSAEVRLRQL…PRPGLSEARC (592 aa)). Positions 71–339 (FEILKVIGRG…AGDFQKHPFF (269 aa)) constitute a Protein kinase domain. ATP-binding positions include 77-85 (IGRGAFSEV) and K100. D195 functions as the Proton acceptor in the catalytic mechanism. 2 positions are modified to phosphoserine; by autocatalysis: S216 and S228. Phosphothreonine; by autocatalysis is present on T234. The AGC-kinase C-terminal domain occupies 340–415 (FGLDWEGLRD…CCMAFRDNQV (76 aa)). Residues 464 to 532 (AETTVTLQQL…QERMEMLQAP (69 aa)) adopt a coiled-coil conformation. The chain crosses the membrane as a helical; Anchor for type IV membrane protein span at residues 593 to 613 (LLLFAAALAAAATLGCTGLVA). Residues 614 to 631 (YTGGLTPVWCFPGATFAP) are Lumenal-facing.

The protein belongs to the protein kinase superfamily. AGC Ser/Thr protein kinase family. DMPK subfamily. Homodimer; homodimerization stimulates the kinase activity. Interacts with HSPB2; may enhance DMPK kinase activity. Interacts with PLN; phosphorylates PLN. May interact with RAC1; may regulate DMPK kinase activity. Interacts with LMNA; may regulate nuclear envelope stability. Mg(2+) is required as a cofactor. In terms of processing, phosphorylated. Autophosphorylates. Phosphorylation by RAF1 may result in activation of DMPK. Proteolytic processing of the C-terminus may remove the transmembrane domain and release the kinase from membranes stimulating its activity. As to expression, expressed in all tissues tested, with a predominance in brain, skeletal muscle, heart, and other tissues containing smooth muscle. In the heart, expression is restricted to the cardiomyocytes in the ventricle and atrium.

It is found in the sarcoplasmic reticulum membrane. The protein resides in the cell membrane. It localises to the endoplasmic reticulum membrane. The protein localises to the nucleus outer membrane. Its subcellular location is the mitochondrion outer membrane. It is found in the cytoplasm. The protein resides in the cytosol. The catalysed reaction is L-seryl-[protein] + ATP = O-phospho-L-seryl-[protein] + ADP + H(+). The enzyme catalyses L-threonyl-[protein] + ATP = O-phospho-L-threonyl-[protein] + ADP + H(+). With respect to regulation, coiled-coil-mediated oligomerization enhances the catalytic activity. Proteolytic processing of the C-terminus may release the protein from membranes and constitute a mean to regulate the enzyme. May be regulated by HSPB2, RAC1, RAF1 and G-protein second messengers. Non-receptor serine/threonine protein kinase which is necessary for the maintenance of skeletal muscle structure and function. May play a role in myocyte differentiation and survival by regulating the integrity of the nuclear envelope and the expression of muscle-specific genes. May also phosphorylate PPP1R12A and inhibit the myosin phosphatase activity to regulate myosin phosphorylation. Also critical to the modulation of cardiac contractility and to the maintenance of proper cardiac conduction activity probably through the regulation of cellular calcium homeostasis. Phosphorylates PLN, a regulator of calcium pumps and may regulate sarcoplasmic reticulum calcium uptake in myocytes. May also phosphorylate FXYD1/PLM which is able to induce chloride currents. May also play a role in synaptic plasticity. The chain is Myotonin-protein kinase (Dmpk) from Mus musculus (Mouse).